We begin with the raw amino-acid sequence, 427 residues long: Transcobalamin-2 (427 aa).

An N-terminal signal peptide occupies residues 1-18 (MRHLGALLFLLGVLGALA). Cystine bridges form between cysteine 21-cysteine 267, cysteine 116-cysteine 309, and cysteine 165-cysteine 205. Cob(II)alamin contacts are provided by residues glutamine 104, 152-156 (TSYYQ), histidine 190, 190-194 (HHSVD), asparagine 242, serine 245, glutamine 291, and 395-397 (WQL).

This sequence belongs to the eukaryotic cobalamin transport proteins family. Interacts with CD320 (via LDL-receptor class A domains).

Its subcellular location is the secreted. Functionally, primary vitamin B12-binding and transport protein. Delivers cobalamin to cells. This chain is Transcobalamin-2 (TCN2), found in Pongo abelii (Sumatran orangutan).